The following is a 212-amino-acid chain: Thiamine-phosphate synthase (212 aa).

4-amino-2-methyl-5-(diphosphooxymethyl)pyrimidine is bound by residues 41–45 and aspartate 76; that span reads QYREK. Aspartate 77 and aspartate 96 together coordinate Mg(2+). Residue serine 114 coordinates 4-amino-2-methyl-5-(diphosphooxymethyl)pyrimidine. Position 141–143 (141–143) interacts with 2-[(2R,5Z)-2-carboxy-4-methylthiazol-5(2H)-ylidene]ethyl phosphate; the sequence is TTS. Residue lysine 144 coordinates 4-amino-2-methyl-5-(diphosphooxymethyl)pyrimidine. 2-[(2R,5Z)-2-carboxy-4-methylthiazol-5(2H)-ylidene]ethyl phosphate is bound by residues glycine 172 and 192 to 193; that span reads IS.

This sequence belongs to the thiamine-phosphate synthase family. It depends on Mg(2+) as a cofactor.

It catalyses the reaction 2-[(2R,5Z)-2-carboxy-4-methylthiazol-5(2H)-ylidene]ethyl phosphate + 4-amino-2-methyl-5-(diphosphooxymethyl)pyrimidine + 2 H(+) = thiamine phosphate + CO2 + diphosphate. It carries out the reaction 2-(2-carboxy-4-methylthiazol-5-yl)ethyl phosphate + 4-amino-2-methyl-5-(diphosphooxymethyl)pyrimidine + 2 H(+) = thiamine phosphate + CO2 + diphosphate. The enzyme catalyses 4-methyl-5-(2-phosphooxyethyl)-thiazole + 4-amino-2-methyl-5-(diphosphooxymethyl)pyrimidine + H(+) = thiamine phosphate + diphosphate. It participates in cofactor biosynthesis; thiamine diphosphate biosynthesis; thiamine phosphate from 4-amino-2-methyl-5-diphosphomethylpyrimidine and 4-methyl-5-(2-phosphoethyl)-thiazole: step 1/1. In terms of biological role, condenses 4-methyl-5-(beta-hydroxyethyl)thiazole monophosphate (THZ-P) and 2-methyl-4-amino-5-hydroxymethyl pyrimidine pyrophosphate (HMP-PP) to form thiamine monophosphate (TMP). The sequence is that of Thiamine-phosphate synthase from Leuconostoc citreum (strain KM20).